The sequence spans 226 residues: Exosome complex component rrp46 (226 aa).

Residues 205-226 (NESDGHENEKNPKEDVEMDVVA) form a disordered region. Residues 207 to 219 (SDGHENEKNPKED) show a composition bias toward basic and acidic residues.

This sequence belongs to the RNase PH family. In terms of assembly, component of the RNA exosome complex. Specifically part of the catalytically inactive RNA exosome core complex (Exo-9) which may associate with the catalytic subunits rrp6 and dis3 in cytoplasmic- and nuclear-specific RNA exosome complex forms. Exo-9 is formed by a hexameric base ring of RNase PH domain-containing subunits and a cap ring consisting of csl4, rrp4 and rrp40.

Its subcellular location is the cytoplasm. The protein localises to the nucleus. The protein resides in the nucleolus. Its function is as follows. Non-catalytic component of the RNA exosome complex which has 3'-&gt;5' exoribonuclease activity and participates in a multitude of cellular RNA processing and degradation events. In the nucleus, the RNA exosome complex is involved in proper maturation of stable RNA species such as rRNA, snRNA and snoRNA, in the elimination of RNA processing by-products and non-coding 'pervasive' transcripts, such as antisense RNA species and cryptic unstable transcripts (CUTs), and of mRNAs with processing defects, thereby limiting or excluding their export to the cytoplasm. In the cytoplasm, the RNA exosome complex is involved in general mRNA turnover and in RNA surveillance pathways, preventing translation of aberrant mRNAs. The catalytic inactive RNA exosome core complex of 9 subunits (Exo-9) is proposed to play a pivotal role in the binding and presentation of RNA for ribonucleolysis, and to serve as a scaffold for the association with catalytic subunits and accessory proteins or complexes. ski6 is part of the hexameric ring of RNase PH domain-containing subunits proposed to form a central channel which threads RNA substrates for degradation. This Schizosaccharomyces pombe (strain 972 / ATCC 24843) (Fission yeast) protein is Exosome complex component rrp46 (rrp46).